Reading from the N-terminus, the 905-residue chain is Protein translocase subunit SecA (905 aa).

ATP-binding positions include Gln87, Gly105 to Thr109, and Asp512. The interval Ala840–Ala905 is disordered. Low complexity predominate over residues Gln843–Ser852. A compositionally biased stretch (basic and acidic residues) spans Glu853–Ala862. The segment covering Glu863–Gln874 has biased composition (polar residues). Zn(2+)-binding residues include Cys886, Cys888, Cys897, and His898. Basic residues predominate over residues Lys892–Ala905.

The protein belongs to the SecA family. As to quaternary structure, monomer and homodimer. Part of the essential Sec protein translocation apparatus which comprises SecA, SecYEG and auxiliary proteins SecDF-YajC and YidC. Zn(2+) serves as cofactor.

The protein localises to the cell inner membrane. It is found in the cytoplasm. The enzyme catalyses ATP + H2O + cellular proteinSide 1 = ADP + phosphate + cellular proteinSide 2.. Functionally, part of the Sec protein translocase complex. Interacts with the SecYEG preprotein conducting channel. Has a central role in coupling the hydrolysis of ATP to the transfer of proteins into and across the cell membrane, serving both as a receptor for the preprotein-SecB complex and as an ATP-driven molecular motor driving the stepwise translocation of polypeptide chains across the membrane. This Actinobacillus pleuropneumoniae serotype 3 (strain JL03) protein is Protein translocase subunit SecA.